A 936-amino-acid polypeptide reads, in one-letter code: Aconitate hydratase A (936 aa).

The tract at residues 401-449 is disordered; that stretch reads VTPDFDAEGPATENTSAQTAGTPASAADAKGNIPSAAAGAEGRPSNPVT. Positions 412 to 422 are enriched in polar residues; it reads TENTSAQTAGT. Residues Cys472, Cys538, and Cys541 each coordinate [4Fe-4S] cluster.

This sequence belongs to the aconitase/IPM isomerase family. Monomer. [4Fe-4S] cluster serves as cofactor.

The catalysed reaction is citrate = D-threo-isocitrate. It carries out the reaction (2S,3R)-3-hydroxybutane-1,2,3-tricarboxylate = 2-methyl-cis-aconitate + H2O. The protein operates within carbohydrate metabolism; tricarboxylic acid cycle; isocitrate from oxaloacetate: step 2/2. It functions in the pathway organic acid metabolism; propanoate degradation. In terms of biological role, involved in the catabolism of short chain fatty acids (SCFA) via the tricarboxylic acid (TCA)(acetyl degradation route) and probably via the 2-methylcitrate cycle I (propionate degradation route). Catalyzes the reversible isomerization of citrate to isocitrate via cis-aconitate. Could catalyze the hydration of 2-methyl-cis-aconitate to yield (2R,3S)-2-methylisocitrate. The apo form of AcnA functions as a RNA-binding regulatory protein. In Corynebacterium jeikeium (strain K411), this protein is Aconitate hydratase A (acn).